The sequence spans 118 residues: uncharacterized protein (118 aa).

Cysteines 11 and 14 form a disulfide.

This sequence belongs to the ArsC family.

This is an uncharacterized protein from Bacillus subtilis (strain 168).